We begin with the raw amino-acid sequence, 71 residues long: UPF0346 protein BCE_2336 (71 aa).

This sequence belongs to the UPF0346 family.

The chain is UPF0346 protein BCE_2336 from Bacillus cereus (strain ATCC 10987 / NRS 248).